The sequence spans 697 residues: tRNA 5-methylaminomethyl-2-thiouridine biosynthesis bifunctional protein MnmC (697 aa).

The interval 1 to 269 (MNKTPLLSVS…LRQQLQQQFA (269 aa)) is tRNA (mnm(5)s(2)U34)-methyltransferase. The tract at residues 287–697 (IGGGIASASL…RKLLKGKALM (411 aa)) is FAD-dependent cmnm(5)s(2)U34 oxidoreductase.

It in the N-terminal section; belongs to the methyltransferase superfamily. tRNA (mnm(5)s(2)U34)-methyltransferase family. The protein in the C-terminal section; belongs to the DAO family. The cofactor is FAD.

The protein localises to the cytoplasm. It catalyses the reaction 5-aminomethyl-2-thiouridine(34) in tRNA + S-adenosyl-L-methionine = 5-methylaminomethyl-2-thiouridine(34) in tRNA + S-adenosyl-L-homocysteine + H(+). In terms of biological role, catalyzes the last two steps in the biosynthesis of 5-methylaminomethyl-2-thiouridine (mnm(5)s(2)U) at the wobble position (U34) in tRNA. Catalyzes the FAD-dependent demodification of cmnm(5)s(2)U34 to nm(5)s(2)U34, followed by the transfer of a methyl group from S-adenosyl-L-methionine to nm(5)s(2)U34, to form mnm(5)s(2)U34. This is tRNA 5-methylaminomethyl-2-thiouridine biosynthesis bifunctional protein MnmC from Shewanella frigidimarina (strain NCIMB 400).